Consider the following 268-residue polypeptide: Putative carbamate hydrolase RutD (268 aa).

One can recognise an AB hydrolase-1 domain in the interval 15-119; sequence PVMVMIAGLG…VIVNGWLSLS (105 aa).

It belongs to the AB hydrolase superfamily. Hydrolase RutD family.

The enzyme catalyses carbamate + 2 H(+) = NH4(+) + CO2. Its function is as follows. Involved in pyrimidine catabolism. May facilitate the hydrolysis of carbamate, a reaction that can also occur spontaneously. In Cronobacter sakazakii (strain ATCC BAA-894) (Enterobacter sakazakii), this protein is Putative carbamate hydrolase RutD.